A 163-amino-acid polypeptide reads, in one-letter code: MEEGKPRRSSAVLWMLIPCGSIIIVLSVFVIILSTRPPVPPDIKILYCKEGWVGYNKNCYFFSEEKNNKSLAVERCKDMDGHLTSISSKEEFKFILRYKGPGNHWIGIEKVDFNGTWKLEDGSSYDNIVPIKGIGDCAYLSDRSIMSSFCFLPKKWICRIILL.

In terms of domain architecture, C-type lectin spans 48–159 (CKEGWVGYNK…CFLPKKWICR (112 aa)). Cystine bridges form between cysteine 76–cysteine 158 and cysteine 137–cysteine 150.

This is Putative C-type lectin protein FPV239 from Fowlpox virus (strain NVSL) (FPV).